A 535-amino-acid chain; its full sequence is CTP synthase (535 aa).

Residues 1–267 (MTKYIFVTGG…DQIVCDHLKL (267 aa)) are amidoligase domain. A CTP-binding site is contributed by serine 13. Serine 13 provides a ligand contact to UTP. 14 to 19 (SLGKGI) provides a ligand contact to ATP. Tyrosine 54 contributes to the L-glutamine binding site. Aspartate 71 provides a ligand contact to ATP. Aspartate 71 and glutamate 141 together coordinate Mg(2+). CTP is bound by residues 148 to 150 (DIE), 188 to 193 (KTKPTQ), and lysine 224. UTP contacts are provided by residues 188–193 (KTKPTQ) and lysine 224. 240-242 (RDA) contacts ATP. One can recognise a Glutamine amidotransferase type-1 domain in the interval 292 to 534 (KIALVGKYVE…VSASITNKES (243 aa)). Glycine 354 is an L-glutamine binding site. Catalysis depends on cysteine 381, which acts as the Nucleophile; for glutamine hydrolysis. L-glutamine contacts are provided by residues 382–385 (LGMQ), glutamate 405, and arginine 462. Residues histidine 507 and glutamate 509 contribute to the active site.

The protein belongs to the CTP synthase family. As to quaternary structure, homotetramer.

It carries out the reaction UTP + L-glutamine + ATP + H2O = CTP + L-glutamate + ADP + phosphate + 2 H(+). It catalyses the reaction L-glutamine + H2O = L-glutamate + NH4(+). The catalysed reaction is UTP + NH4(+) + ATP = CTP + ADP + phosphate + 2 H(+). It functions in the pathway pyrimidine metabolism; CTP biosynthesis via de novo pathway; CTP from UDP: step 2/2. With respect to regulation, allosterically activated by GTP, when glutamine is the substrate; GTP has no effect on the reaction when ammonia is the substrate. The allosteric effector GTP functions by stabilizing the protein conformation that binds the tetrahedral intermediate(s) formed during glutamine hydrolysis. Inhibited by the product CTP, via allosteric rather than competitive inhibition. In terms of biological role, catalyzes the ATP-dependent amination of UTP to CTP with either L-glutamine or ammonia as the source of nitrogen. Regulates intracellular CTP levels through interactions with the four ribonucleotide triphosphates. This chain is CTP synthase, found in Bacillus mycoides (strain KBAB4) (Bacillus weihenstephanensis).